Here is a 399-residue protein sequence, read N- to C-terminus: Phosphoglycerate kinase (399 aa).

Substrate is bound by residues 22-24, Arg37, 60-63, Arg119, and Arg152; these read DLN and HFGR. ATP-binding positions include Lys202, Glu324, and 354–357; that span reads GGDT.

The protein belongs to the phosphoglycerate kinase family. As to quaternary structure, monomer.

It is found in the cytoplasm. The catalysed reaction is (2R)-3-phosphoglycerate + ATP = (2R)-3-phospho-glyceroyl phosphate + ADP. It participates in carbohydrate degradation; glycolysis; pyruvate from D-glyceraldehyde 3-phosphate: step 2/5. The polypeptide is Phosphoglycerate kinase (Rhizobium meliloti (strain 1021) (Ensifer meliloti)).